The primary structure comprises 754 residues: Anaphase-promoting complex subunit cdh1 (754 aa).

The span at 1 to 10 (MFHSEYEKKL) shows a compositional bias: basic and acidic residues. Disordered stretches follow at residues 1-30 (MFHSEYEKKLRSPSKSPGSKTNYYNNYSNN), 47-116 (YEDN…TTTT), and 200-351 (IFNN…NNNN). 2 stretches are compositionally biased toward low complexity: residues 50 to 116 (NGSN…TTTT) and 202 to 325 (NNNN…ININ). Over residues 326-339 (QSPSKKQSLMSATM) the composition is skewed to polar residues. Residues 340 to 351 (NNNNSNNNNNNN) show a composition bias toward low complexity. WD repeat units lie at residues 411-448 (KDDFYLNLIDWSSHNILAVGLDTSVYLWNATTSQVSKL), 452-492 (ESGQ…KIRE), 495-532 (GHNTRVNALAWNNHILSSGGKDKVILHHDVRDCSNNYT), and 537-576 (GHRHEICGLKWSPDGQQLASGGNDNLLNVWDHSMTQQPQQ). A disordered region spans residues 570-598 (MTQQPQQQHQPPPPPPSSNTSSISQQQQQ). The span at 587–598 (SNTSSISQQQQQ) shows a compositional bias: low complexity. WD repeat units follow at residues 610-652 (FHYA…SIQS), 654-695 (DTGS…PVTT), and 698-737 (GHTMRVLYLAVSPDGQTVCTGAGDNSLRFWNLFPSNKESS).

The protein belongs to the WD repeat CDC20/Fizzy family. The APC/C is composed of at least 13 subunits that stay tightly associated throughout the cell cycle: anapc1, anapc2, anapc3, anapc4, anapc5, anapc6, anapc7, anapc8, anapc10, anapc11, cdc20, cdc26 and cdh1.

Its subcellular location is the nucleus. It functions in the pathway protein modification; protein ubiquitination. In terms of biological role, component of the anaphase promoting complex/cyclosome (APC/C), a cell cycle-regulated E3 ubiquitin-protein ligase complex that controls progression through mitosis and the G1 phase of the cell cycle. The chain is Anaphase-promoting complex subunit cdh1 (cdh1) from Dictyostelium discoideum (Social amoeba).